The sequence spans 169 residues: Large ribosomal subunit protein uL10 (169 aa).

It belongs to the universal ribosomal protein uL10 family. Part of the ribosomal stalk of the 50S ribosomal subunit. The N-terminus interacts with L11 and the large rRNA to form the base of the stalk. The C-terminus forms an elongated spine to which L12 dimers bind in a sequential fashion forming a multimeric L10(L12)X complex.

Functionally, forms part of the ribosomal stalk, playing a central role in the interaction of the ribosome with GTP-bound translation factors. The polypeptide is Large ribosomal subunit protein uL10 (Rickettsia africae (strain ESF-5)).